Here is a 138-residue protein sequence, read N- to C-terminus: Transcription antitermination protein NusB (138 aa).

The protein belongs to the NusB family.

Functionally, involved in transcription antitermination. Required for transcription of ribosomal RNA (rRNA) genes. Binds specifically to the boxA antiterminator sequence of the ribosomal RNA (rrn) operons. In Helicobacter acinonychis (strain Sheeba), this protein is Transcription antitermination protein NusB.